The chain runs to 359 residues: NADH-quinone oxidoreductase subunit H (359 aa).

8 helical membrane-spanning segments follow: residues 19–39, 94–114, 127–147, 175–195, 202–222, 255–275, 301–321, and 337–357; these read IGWFPLGLVIVAAIPLVFIAL, FLFVIGPGILFVGSFLAFAVL, VGLFYAVGIVAIEVVGILAAG, IALLCAAMLAGTLSMQQIILM, FLHWFLFTNPIAWLPFLIYFI, FAVIFLAEYGSMFMVSAIISI, VWGAFWIIMKGFFFIFVQMWL, and CWKVLTPFSLVSFVLTAIWVI.

It belongs to the complex I subunit 1 family. NDH-1 is composed of 14 different subunits. Subunits NuoA, H, J, K, L, M, N constitute the membrane sector of the complex.

It localises to the cell inner membrane. The enzyme catalyses a quinone + NADH + 5 H(+)(in) = a quinol + NAD(+) + 4 H(+)(out). Its function is as follows. NDH-1 shuttles electrons from NADH, via FMN and iron-sulfur (Fe-S) centers, to quinones in the respiratory chain. The immediate electron acceptor for the enzyme in this species is believed to be ubiquinone. Couples the redox reaction to proton translocation (for every two electrons transferred, four hydrogen ions are translocated across the cytoplasmic membrane), and thus conserves the redox energy in a proton gradient. This subunit may bind ubiquinone. In Chlorobaculum tepidum (strain ATCC 49652 / DSM 12025 / NBRC 103806 / TLS) (Chlorobium tepidum), this protein is NADH-quinone oxidoreductase subunit H.